The primary structure comprises 149 residues: Inner membrane protein YdcZ (149 aa).

Residues 1–4 (MNQS) lie on the Periplasmic side of the membrane. The chain crosses the membrane as a helical span at residues 5–25 (LTLAFLIAAGIGLVVQNTLMV). The Cytoplasmic segment spans residues 26–33 (RITQTSST). Residues 34–54 (ILIAMLLNSLVGIVLFVSILW) form a helical membrane-spanning segment. The Periplasmic portion of the chain corresponds to 55–70 (FKQGMAGFGELVSSVR). The helical transmembrane segment at 71 to 91 (WWTLIPGLLGSFFVFASISGY) threads the bilayer. Topologically, residues 92–93 (QN) are cytoplasmic. The helical transmembrane segment at 94–114 (VGAATTIAVLVASQLIGGLML) threads the bilayer. The Periplasmic segment spans residues 115-123 (DIFRSHGVP). Residues 124-144 (LRALFGPICGAILLVVGAWLV) form a helical membrane-spanning segment. Residues 145 to 149 (ARRSF) are Cytoplasmic-facing.

It is found in the cell inner membrane. This is Inner membrane protein YdcZ (ydcZ) from Escherichia coli (strain K12).